The chain runs to 260 residues: Salicylic acid-binding protein 2 (260 aa).

Residues Ala13, Ser81, and Lys159 each coordinate salicylate. Catalysis depends on Ser81, which acts as the Acyl-ester intermediate. Catalysis depends on charge relay system residues Asp210 and His238. Salicylate-binding residues include His238, Leu253, and His257.

The protein belongs to the AB hydrolase superfamily. Methylesterase family.

It catalyses the reaction methyl salicylate + H2O = salicylate + methanol + H(+). The protein operates within plant hormone biosynthesis. Its activity is regulated as follows. Esterase activity is down-regulated by salicylic acid (SA) or by tetraFA, a synthetic SA analog. In terms of biological role, required to convert methyl salicylate (MeSA) to salicylic acid (SA) as part of the signal transduction pathways that activate systemic acquired resistance in systemic tissue. MeSA is believed to be an inactive form that needs to be demethylated to exert a biological effect. Also able to catalyze the conversion of acibenzolar-S-methyl into acibenzolar to induce systemic acquired resistance. The sequence is that of Salicylic acid-binding protein 2 from Nicotiana tabacum (Common tobacco).